We begin with the raw amino-acid sequence, 183 residues long: Large ribosomal subunit protein uL6 (183 aa).

This sequence belongs to the universal ribosomal protein uL6 family. As to quaternary structure, part of the 50S ribosomal subunit.

Functionally, this protein binds to the 23S rRNA, and is important in its secondary structure. It is located near the subunit interface in the base of the L7/L12 stalk, and near the tRNA binding site of the peptidyltransferase center. The sequence is that of Large ribosomal subunit protein uL6 from Methanococcus aeolicus (strain ATCC BAA-1280 / DSM 17508 / OCM 812 / Nankai-3).